The chain runs to 253 residues: 1-(5-phosphoribosyl)-5-[(5-phosphoribosylamino)methylideneamino] imidazole-4-carboxamide isomerase (253 aa).

Asp8 acts as the Proton acceptor in catalysis. The active-site Proton donor is Asp129.

It belongs to the HisA/HisF family.

Its subcellular location is the cytoplasm. It carries out the reaction 1-(5-phospho-beta-D-ribosyl)-5-[(5-phospho-beta-D-ribosylamino)methylideneamino]imidazole-4-carboxamide = 5-[(5-phospho-1-deoxy-D-ribulos-1-ylimino)methylamino]-1-(5-phospho-beta-D-ribosyl)imidazole-4-carboxamide. It functions in the pathway amino-acid biosynthesis; L-histidine biosynthesis; L-histidine from 5-phospho-alpha-D-ribose 1-diphosphate: step 4/9. This Microcystis aeruginosa (strain NIES-843 / IAM M-2473) protein is 1-(5-phosphoribosyl)-5-[(5-phosphoribosylamino)methylideneamino] imidazole-4-carboxamide isomerase.